Consider the following 467-residue polypeptide: Argininosuccinate lyase (467 aa).

Positions 27, 114, and 159 each coordinate 2-(N(omega)-L-arginino)succinate. The active-site Proton acceptor is His-160. Catalysis depends on Ser-281, which acts as the Proton donor. Asn-289, Tyr-321, Gln-326, and Lys-329 together coordinate 2-(N(omega)-L-arginino)succinate.

Belongs to the lyase 1 family. Argininosuccinate lyase subfamily. In terms of assembly, homotetramer.

It catalyses the reaction 2-(N(omega)-L-arginino)succinate = fumarate + L-arginine. It participates in amino-acid biosynthesis; L-arginine biosynthesis; L-arginine from L-ornithine and carbamoyl phosphate: step 3/3. Its pathway is nitrogen metabolism; urea cycle; L-arginine and fumarate from (N(omega)-L-arginino)succinate: step 1/1. The protein is Argininosuccinate lyase (ASL) of Aquarana catesbeiana (American bullfrog).